The primary structure comprises 300 residues: MADQLIRATAAEDGIRAVGVITTRLTEEARQRHKLSYVATAALGRTMAAGLLLASSMKQPQARVNIRIKGDGPLEGLFVDAGCDGTVRGYVYNPAIELPPNAKGKLDVGGAVGSQGYLYVIRDLGYGYPYSSTVELVSGEIAEDITHYLVTSEQTPSALVLGVFVTEAGVTAAGGVLIQVLPKAAQDEALVEKLESRISALSGFTPLLQRGLSLSEIFEQLLGDMGLTILPQRQLVRFHCRCSFDRMLGALKILGSDELQDMIDRDNGAEATCHFCGEVYQASSEQLAELIDELKAEAGG.

Cystine bridges form between Cys-240–Cys-242 and Cys-273–Cys-276.

Belongs to the HSP33 family. Under oxidizing conditions two disulfide bonds are formed involving the reactive cysteines. Under reducing conditions zinc is bound to the reactive cysteines and the protein is inactive.

The protein resides in the cytoplasm. Its function is as follows. Redox regulated molecular chaperone. Protects both thermally unfolding and oxidatively damaged proteins from irreversible aggregation. Plays an important role in the bacterial defense system toward oxidative stress. The chain is 33 kDa chaperonin from Cyanothece sp. (strain PCC 7425 / ATCC 29141).